The following is a 421-amino-acid chain: 3-isopropylmalate dehydratase large subunit (421 aa).

[4Fe-4S] cluster-binding residues include C302, C362, and C365.

Belongs to the aconitase/IPM isomerase family. LeuC type 2 subfamily. Heterodimer of LeuC and LeuD. The cofactor is [4Fe-4S] cluster.

The catalysed reaction is (2R,3S)-3-isopropylmalate = (2S)-2-isopropylmalate. It functions in the pathway amino-acid biosynthesis; L-leucine biosynthesis; L-leucine from 3-methyl-2-oxobutanoate: step 2/4. Functionally, catalyzes the isomerization between 2-isopropylmalate and 3-isopropylmalate, via the formation of 2-isopropylmaleate. This is 3-isopropylmalate dehydratase large subunit from Nitratiruptor sp. (strain SB155-2).